We begin with the raw amino-acid sequence, 353 residues long: Melanin-concentrating hormone receptor 1 (353 aa).

Positions 1–29 (MDLEASLLPTGPNASNTSDGPDNLTSAGS) are disordered. Residues 1-44 (MDLEASLLPTGPNASNTSDGPDNLTSAGSPPRTGSISYINIIMP) lie on the Extracellular side of the membrane. Polar residues predominate over residues 12–29 (PNASNTSDGPDNLTSAGS). N-linked (GlcNAc...) asparagine glycans are attached at residues Asn13, Asn16, and Asn23. Residues 45 to 67 (SVFGTICLLGIIGNSTVIFAVVK) traverse the membrane as a helical segment. At 68–79 (KSKLHWCNNVPD) the chain is on the cytoplasmic side. The helical transmembrane segment at 80 to 102 (IFIINLSVVDLLFLLGMPFMIHQ) threads the bilayer. The Extracellular segment spans residues 103-116 (LMGNGVWHFGETMC). A disulfide bridge connects residues Cys116 and Cys194. A helical transmembrane segment spans residues 117-139 (TLITAMDANSQFTSTYILTAMAI). The Cytoplasmic portion of the chain corresponds to 140 to 158 (DRYLATVHPISSTKFRKPS). Residues 159–181 (VATLVICLLWALSFISITPVWLY) form a helical membrane-spanning segment. Residues 182 to 209 (ARLIPFPGGAVGCGIRLPNPDTDLYWFT) are Extracellular-facing. Residues 210–232 (LYQFFLAFALPFVVITAAYVRIL) form a helical membrane-spanning segment. At 233–252 (QRMTSSVAPASQRSIRLRTK) the chain is on the cytoplasmic side. Residues 253–275 (RVTRTAIAICLVFFVCWAPYYVL) form a helical membrane-spanning segment. Residues 276-289 (QLTQLSISRPTLTF) are Extracellular-facing. Residues 290–312 (VYLYNAAISLGYANSCLNPFVYI) form a helical membrane-spanning segment. Over 313 to 353 (VLCETFRKRLVLSVKPAAQGQLRAVSNAQTADEERTESKGT) the chain is Cytoplasmic.

It belongs to the G-protein coupled receptor 1 family. Interacts with NCDN. As to expression, highest level in brain, particularly in the frontal cortex and hypothalamus, lower levels in the liver and heart.

The protein localises to the cell membrane. Its function is as follows. Receptor for melanin-concentrating hormone, coupled to both G proteins that inhibit adenylyl cyclase and G proteins that activate phosphoinositide hydrolysis. The sequence is that of Melanin-concentrating hormone receptor 1 from Homo sapiens (Human).